We begin with the raw amino-acid sequence, 183 residues long: UPF0316 protein EF_1609 (183 aa).

The next 3 membrane-spanning stretches (helical) occupy residues 1-21, 35-55, and 62-82; these read MVVD…YITL, VIAP…LSMV, and PLNL…GIKI.

It belongs to the UPF0316 family.

The protein resides in the cell membrane. This is UPF0316 protein EF_1609 from Enterococcus faecalis (strain ATCC 700802 / V583).